The sequence spans 354 residues: MATTAASSLLKSSFAGSRLPSATRAPSSVVVSTGGAPRTAAISASISSSNPPYDLTSFKFSPIKESIVSREMTRRYMTDMITHADTDVVIVGAGSAGLSCAYELSKDPTVRVAIVEQSVSPGGGAWLGGQLFSAMVVRKPAHLFLDELGVAYDEAADDYVVVKHAALFTSTVMSAVLARPNVKLFNAVAVEDLIVKGGRVGGVVTNWALVSMNHDTQSCMDPNVMEAKVVVSSCGHDGPFGATGVKRLQDIGMIAAVPGMKALDMNAAEDAIVRLTREVVPGMIVTGMEVAEIDGAPRMGPTFGAMMISGQKAAHLALKALGRPNAVDGTIPKVSPALREEFVIASKDDEVVDA.

Residues 1–43 (MATTAASSLLKSSFAGSRLPSATRAPSSVVVSTGGAPRTAAIS) constitute a chloroplast transit peptide. Substrate is bound by residues Ala96, 116-117 (EQ), Gly124, and Val190. Position 219 is a 2,3-didehydroalanine (Cys) (Cys219). Residues Asp221, His236, Met288, and 298-300 (RMG) each bind substrate.

Belongs to the THI4 family. As to quaternary structure, homooctamer. It depends on Fe cation as a cofactor. In terms of processing, during the catalytic reaction, a sulfide is transferred from Cys-219 to a reaction intermediate, generating a dehydroalanine residue.

The protein localises to the plastid. It is found in the chloroplast. It catalyses the reaction [ADP-thiazole synthase]-L-cysteine + glycine + NAD(+) = [ADP-thiazole synthase]-dehydroalanine + ADP-5-ethyl-4-methylthiazole-2-carboxylate + nicotinamide + 3 H2O + 2 H(+). Its function is as follows. Involved in biosynthesis of the thiamine precursor thiazole. Catalyzes the conversion of NAD and glycine to adenosine diphosphate 5-(2-hydroxyethyl)-4-methylthiazole-2-carboxylic acid (ADT), an adenylated thiazole intermediate. The reaction includes an iron-dependent sulfide transfer from a conserved cysteine residue of the protein to a thiazole intermediate. The enzyme can only undergo a single turnover, which suggests it is a suicide enzyme. May have additional roles in adaptation to various stress conditions and in DNA damage tolerance. The sequence is that of Thiamine thiazole synthase 1, chloroplastic from Sorghum bicolor (Sorghum).